The chain runs to 1279 residues: Amylopullulanase (1279 aa).

A signal peptide spans 1-35 (MYKKLFTKKFISFVMSLLLVLTAAFSSMPFHNVYA). Asp-248, Asn-250, Asp-288, Asp-343, Asn-401, Asp-403, Asn-406, Asp-407, Gly-452, and Asp-454 together coordinate Ca(2+). His-527 and Arg-627 together coordinate substrate. Asp-629 functions as the Nucleophile in the catalytic mechanism. Catalysis depends on Glu-658, which acts as the Proton donor. Residues 734-735 (HD), Asp-794, and Arg-798 contribute to the substrate site. 2 Fibronectin type-III domains span residues 930 to 1022 (APQV…AYPI) and 1158 to 1252 (KPTA…VVPI).

It belongs to the glycosyl hydrolase 13 family. Requires Ca(2+) as cofactor.

The catalysed reaction is Endohydrolysis of (1-&gt;4)-alpha-D-glucosidic linkages in polysaccharides containing three or more (1-&gt;4)-alpha-linked D-glucose units.. The enzyme catalyses Hydrolysis of (1-&gt;6)-alpha-D-glucosidic linkages in pullulan, amylopectin and glycogen, and in the alpha- and beta-limit dextrins of amylopectin and glycogen.. This is Amylopullulanase (apu) from Thermoanaerobacterium saccharolyticum.